A 61-amino-acid chain; its full sequence is UPF0434 protein PFL_1779 (61 aa).

Belongs to the UPF0434 family.

The sequence is that of UPF0434 protein PFL_1779 from Pseudomonas fluorescens (strain ATCC BAA-477 / NRRL B-23932 / Pf-5).